The chain runs to 418 residues: 26S proteasome regulatory subunit 6B (418 aa).

Met1 is modified (N-acetylmethionine). Phosphoserine is present on Ser21. Thr25 bears the Phosphothreonine mark. Ser28 is subject to Phosphoserine. Position 206 to 213 (206 to 213 (GPPGCGKT)) interacts with ATP. Residues Lys397 and Lys401 each carry the N6-acetyllysine modification.

Belongs to the AAA ATPase family. Component of the 19S proteasome regulatory particle complex. The 26S proteasome consists of a 20S core particle (CP) and two 19S regulatory subunits (RP). The regulatory particle is made of a lid composed of 9 subunits, a base containing 6 ATPases including PSMC4 and few additional components. Interacts with NR1I3. Interacts with PAAF1. Interacts with TRIM5. Interacts with ZFAND1.

The protein resides in the cytoplasm. Its subcellular location is the nucleus. In terms of biological role, component of the 26S proteasome, a multiprotein complex involved in the ATP-dependent degradation of ubiquitinated proteins. This complex plays a key role in the maintenance of protein homeostasis by removing misfolded or damaged proteins, which could impair cellular functions, and by removing proteins whose functions are no longer required. Therefore, the proteasome participates in numerous cellular processes, including cell cycle progression, apoptosis, or DNA damage repair. PSMC4 belongs to the heterohexameric ring of AAA (ATPases associated with diverse cellular activities) proteins that unfolds ubiquitinated target proteins that are concurrently translocated into a proteolytic chamber and degraded into peptides. This is 26S proteasome regulatory subunit 6B (PSMC4) from Bos taurus (Bovine).